Consider the following 385-residue polypeptide: GTPase Obg (385 aa).

Residues 1 to 159 enclose the Obg domain; the sequence is MKFVDEATIL…REIQLELMLL (159 aa). The region spanning 160 to 333 is the OBG-type G domain; the sequence is ADVGMLGLPN…LCWDVMAFIN (174 aa). Residues 166-173, 191-195, 213-216, 283-286, and 314-316 contribute to the GTP site; these read GLPNAGKS, FTTLV, DIPG, NKAD, and SAA. 2 residues coordinate Mg(2+): serine 173 and threonine 193. The segment covering 362-379 has biased composition (acidic residues); the sequence is QQEEAEETLDDDWDEDGV. A disordered region spans residues 362 to 385; that stretch reads QQEEAEETLDDDWDEDGVETIYQR.

This sequence belongs to the TRAFAC class OBG-HflX-like GTPase superfamily. OBG GTPase family. As to quaternary structure, monomer. It depends on Mg(2+) as a cofactor.

Its subcellular location is the cytoplasm. In terms of biological role, an essential GTPase which binds GTP, GDP and possibly (p)ppGpp with moderate affinity, with high nucleotide exchange rates and a fairly low GTP hydrolysis rate. Plays a role in control of the cell cycle, stress response, ribosome biogenesis and in those bacteria that undergo differentiation, in morphogenesis control. In Sodalis glossinidius (strain morsitans), this protein is GTPase Obg.